Here is a 235-residue protein sequence, read N- to C-terminus: SMN complex subunit yip11/gem2 (235 aa).

The tract at residues 1 to 34 (MPSKRKRNPLQYQTSGSLDEETNQRSAFPQIDNN) is disordered. Over residues 24 to 34 (QRSAFPQIDNN) the composition is skewed to polar residues. Residues Ser-117 and Ser-118 each carry the phosphoserine modification.

This sequence belongs to the gemin-2 family. As to quaternary structure, part of the core SMN complex at least composed of smn1, yip11/gem2, gem6, gem7 and gem8. Interacts with smn1; the interaction is direct.

The protein resides in the nucleus. The SMN complex catalyzes the assembly of small nuclear ribonucleoproteins (snRNPs), the building blocks of the spliceosome, and thereby plays an important role in the splicing of cellular pre-mRNAs. Most spliceosomal snRNPs contain a common set of Sm proteins smb1, smd1, smd2, smd3, sme1, smf1 and smg1 that assemble in a heptameric protein ring on the Sm site of the small nuclear RNA to form the core snRNP. In the cytosol, the Sm proteins smd1, smd2, sme1, smf1 and smg1 (5Sm) are trapped in an inactive 6S pICln-Sm complex by the chaperone saf5. To complete assembly of core snRNPs, the SMN complex accepts 5Sm from saf5. Binding of snRNA inside 5Sm ultimately triggers eviction of the SMN complex, thereby allowing binding of smd3 and smb1 to complete assembly of the core snRNP. Within the SMN complex, yip11/gem2 constrains the conformation of 5Sm, thereby promoting 5Sm binding to snRNA containing the snRNP code (a nonameric Sm site and a 3'-adjacent stem-loop), thus preventing progression of assembly until a cognate substrate is bound. The polypeptide is SMN complex subunit yip11/gem2 (yip11) (Schizosaccharomyces pombe (strain 972 / ATCC 24843) (Fission yeast)).